Here is a 312-residue protein sequence, read N- to C-terminus: Ribonuclease HIII (312 aa).

The RNase H type-2 domain occupies 95-311 (FNCIGSDEAG…REKAQKILKP (217 aa)). A divalent metal cation is bound by residues Asp-101, Glu-102, and Asp-206.

This sequence belongs to the RNase HII family. RnhC subfamily. Mn(2+) serves as cofactor. Requires Mg(2+) as cofactor.

Its subcellular location is the cytoplasm. It catalyses the reaction Endonucleolytic cleavage to 5'-phosphomonoester.. Functionally, endonuclease that specifically degrades the RNA of RNA-DNA hybrids. In Staphylococcus aureus (strain USA300), this protein is Ribonuclease HIII.